Here is a 34-residue protein sequence, read N- to C-terminus: Peptidoglycan hydrolase P7 (34 aa).

A helical transmembrane segment spans residues 10–26; the sequence is VLITLGVLAAVNKVSAL.

The protein resides in the virion membrane. Exolysin that catalyzes the cleavage of the host peptidoglycans during virus entry. The polypeptide is Peptidoglycan hydrolase P7 (VII) (Pseudoalteromonas espejiana (Bacteriophage PM2)).